Here is a 150-residue protein sequence, read N- to C-terminus: Catabolic 3-dehydroquinase 1 (150 aa).

Tyr24 acts as the Proton acceptor in catalysis. Substrate contacts are provided by Asn75, His81, and Asp88. The active-site Proton donor is the His101. Substrate is bound by residues 102-103 (VS) and Arg112.

It belongs to the type-II 3-dehydroquinase family. As to quaternary structure, homododecamer. Adopts a ring-like structure, composed of an arrangement of two hexameric rings stacked on top of one another.

The catalysed reaction is 3-dehydroquinate = 3-dehydroshikimate + H2O. It functions in the pathway aromatic compound metabolism; 3,4-dihydroxybenzoate biosynthesis; 3,4-dihydroxybenzoate from 3-dehydroquinate: step 1/2. In terms of biological role, is involved in the catabolism of quinate. Allows the utilization of quinate as carbon source via the beta-ketoadipate pathway. The protein is Catabolic 3-dehydroquinase 1 of Neosartorya fischeri (strain ATCC 1020 / DSM 3700 / CBS 544.65 / FGSC A1164 / JCM 1740 / NRRL 181 / WB 181) (Aspergillus fischerianus).